A 210-amino-acid polypeptide reads, in one-letter code: Methylthioribulose-1-phosphate dehydratase (210 aa).

Zn(2+) is bound by residues His97 and His99.

Belongs to the aldolase class II family. MtnB subfamily. As to quaternary structure, homotetramer. Zn(2+) serves as cofactor.

The enzyme catalyses 5-(methylsulfanyl)-D-ribulose 1-phosphate = 5-methylsulfanyl-2,3-dioxopentyl phosphate + H2O. It functions in the pathway amino-acid biosynthesis; L-methionine biosynthesis via salvage pathway; L-methionine from S-methyl-5-thio-alpha-D-ribose 1-phosphate: step 2/6. Functionally, catalyzes the dehydration of methylthioribulose-1-phosphate (MTRu-1-P) into 2,3-diketo-5-methylthiopentyl-1-phosphate (DK-MTP-1-P). The chain is Methylthioribulose-1-phosphate dehydratase from Geobacillus kaustophilus (strain HTA426).